The sequence spans 354 residues: UPF0283 membrane protein HI_0043 (354 aa).

3 helical membrane-spanning segments follow: residues 57 to 77 (LLKFTALLFGLATVAQSVQWI), 87 to 107 (IYLAFALVSLIIILLGIKEII), and 211 to 231 (ESAVIVAISPLAVVDMFFIAW).

It belongs to the UPF0283 family.

The protein localises to the cell inner membrane. This Haemophilus influenzae (strain ATCC 51907 / DSM 11121 / KW20 / Rd) protein is UPF0283 membrane protein HI_0043.